Reading from the N-terminus, the 217-residue chain is MGILDPYKGFGVTFGTMFKKPTTEQYPEEKKETAPRFHGRHQLNRHPDGLEKCVGCELCAWACPADAIYVEGADNTEAERYSPGERYGRVYQINYLRCILCGLCIEACPTRALTMSNDYELADDSRQDLIFTKEQLLAPLREGMEAPPHPMRLGSSETDYYTRDPDAPLPWQASGQEQVAGQAAELEAADVIARRTAGEHSRADEVPAHGAGSERPR.

The disordered stretch occupies residues 22–41 (TTEQYPEEKKETAPRFHGRH). 4Fe-4S ferredoxin-type domains follow at residues 43-73 (LNRH…VEGA) and 89-118 (RVYQ…MSND). [4Fe-4S] cluster is bound by residues Cys53, Cys56, Cys59, Cys63, Cys98, Cys101, Cys104, and Cys108. The segment at 193–217 (ARRTAGEHSRADEVPAHGAGSERPR) is disordered.

It belongs to the complex I 23 kDa subunit family. NDH-1 is composed of 14 different subunits. Subunits NuoA, H, J, K, L, M, N constitute the membrane sector of the complex. It depends on [4Fe-4S] cluster as a cofactor.

It is found in the cell membrane. The catalysed reaction is a quinone + NADH + 5 H(+)(in) = a quinol + NAD(+) + 4 H(+)(out). Its function is as follows. NDH-1 shuttles electrons from NADH, via FMN and iron-sulfur (Fe-S) centers, to quinones in the respiratory chain. The immediate electron acceptor for the enzyme in this species is believed to be ubiquinone. Couples the redox reaction to proton translocation (for every two electrons transferred, four hydrogen ions are translocated across the cytoplasmic membrane), and thus conserves the redox energy in a proton gradient. This is NADH-quinone oxidoreductase subunit I from Frankia casuarinae (strain DSM 45818 / CECT 9043 / HFP020203 / CcI3).